We begin with the raw amino-acid sequence, 267 residues long: Methylglyoxal reductase DkgB (267 aa).

Y39 serves as the catalytic Proton donor. H97 provides a ligand contact to substrate. Residue 179–231 (MTLAYGKALKDEVIARIAAKHNATPAQVILAWAMGEGYSVIPSSTKRENLESN) coordinates NADP(+).

This sequence belongs to the aldo/keto reductase family. In terms of assembly, monomer.

It is found in the cytoplasm. It carries out the reaction hydroxyacetone + NADP(+) = methylglyoxal + NADPH + H(+). Aldo-keto reductase that significantly contributes to cellular methylglyoxal detoxification by catalyzing the NADPH-dependent conversion of methylglyoxal to acetol. This Escherichia coli O157:H7 protein is Methylglyoxal reductase DkgB.